Reading from the N-terminus, the 277-residue chain is Putative hydro-lyase BPP3031 (277 aa).

It belongs to the D-glutamate cyclase family.

The protein is Putative hydro-lyase BPP3031 of Bordetella parapertussis (strain 12822 / ATCC BAA-587 / NCTC 13253).